We begin with the raw amino-acid sequence, 244 residues long: Heat shock transcription factor (244 aa).

The DNA-binding element occupies 13 to 108 (IPKFIMKLYK…LLGFDDSLRM (96 aa)). The interval 123-168 (DGSLKEIVEYLYVQNQELYTELSVCKERIERQERALNGLIEILSRV) is involved in trimerization. Positions 204 to 244 (EGCEPASPPLQDKGIPELSFKPGGIPHADSDTKDDNYDPFF) are disordered. Positions 231–244 (ADSDTKDDNYDPFF) are enriched in basic and acidic residues.

It belongs to the HSF family. Homotrimer. Homotrimerization increases the affinity of HSF1 to DNA.

The protein resides in the nucleus. Functionally, DNA-binding transcription factor that specifically binds heat shock promoter elements (HSE) and activates transcription. The chain is Heat shock transcription factor from Encephalitozoon cuniculi (strain GB-M1) (Microsporidian parasite).